The chain runs to 463 residues: Chromosomal replication initiator protein DnaA (463 aa).

A domain I, interacts with DnaA modulators region spans residues 1 to 83; that stretch reads MNTNQIILTD…LQLFQHYNNT (83 aa). Positions 83-124 are domain II; that stretch reads TIKSIDIITKELPGTTQTVIELPTKTFADIGSSELNSENIFS. The domain III, AAA+ region stretch occupies residues 125–343; sequence TLDVRFTFDN…GALNKVIAHS (219 aa). The ATP site is built by G171, G173, K174, and T175. Residues 344–463 form a domain IV, binds dsDNA region; that stretch reads NFTLKEITLE…INLLMKILQH (120 aa).

Belongs to the DnaA family. In terms of assembly, oligomerizes as a right-handed, spiral filament on DNA at oriC.

It localises to the cytoplasm. In terms of biological role, plays an essential role in the initiation and regulation of chromosomal replication. ATP-DnaA binds to the origin of replication (oriC) to initiate formation of the DNA replication initiation complex once per cell cycle. Binds the DnaA box (a 9 base pair repeat at the origin) and separates the double-stranded (ds)DNA. Forms a right-handed helical filament on oriC DNA; dsDNA binds to the exterior of the filament while single-stranded (ss)DNA is stabiized in the filament's interior. The ATP-DnaA-oriC complex binds and stabilizes one strand of the AT-rich DNA unwinding element (DUE), permitting loading of DNA polymerase. After initiation quickly degrades to an ADP-DnaA complex that is not apt for DNA replication. Binds acidic phospholipids. This is Chromosomal replication initiator protein DnaA from Rickettsia akari (strain Hartford).